Here is a 318-residue protein sequence, read N- to C-terminus: Inner membrane protein YbhN (318 aa).

The Periplasmic segment spans residues 1–13; it reads MSKSHPRWRLAKK. The helical transmembrane segment at 14-34 threads the bilayer; that stretch reads ILTWLFFIAVIVLLVVYAKKV. The Cytoplasmic portion of the chain corresponds to 35–50; that stretch reads DWEEVWKVIRDYNRVA. The helical transmembrane segment at 51-71 threads the bilayer; it reads LLSAVGLVVVSYLIYGCYDLL. At 72-85 the chain is on the periplasmic side; the sequence is ARFYCGHKLAKRQV. The chain crosses the membrane as a helical span at residues 86–106; that stretch reads MLVSFICYAFNLTLSTWVGGI. Residues 107–125 lie on the Cytoplasmic side of the membrane; the sequence is GMRYRLYSRLGLPGSTITR. Residues 126 to 146 traverse the membrane as a helical segment; sequence IFSLSITTNWLGYILLAGIIF. Over 147–165 the chain is Periplasmic; that stretch reads TAGVVELPDHWYVDQTTLR. Residues 166-186 traverse the membrane as a helical segment; the sequence is ILGIGLLMIIAVYLWFCAFAK. The Cytoplasmic portion of the chain corresponds to 187 to 205; the sequence is HRHMTIKGQKLVLPSWKFA. The helical transmembrane segment at 206 to 226 threads the bilayer; the sequence is LAQMLISSVNWMVMGAIIWLL. Over 227–233 the chain is Periplasmic; that stretch reads LGQSVNY. The next 2 helical transmembrane spans lie at 234 to 254 and 255 to 275; these read FFVLGVLLVSSIAGVIVHIPA and GIGVLEAVFIALLAGEHTSKG. The Periplasmic portion of the chain corresponds to 276-277; the sequence is TI. The helical transmembrane segment at 278–298 threads the bilayer; the sequence is IAALLAYRVLYYFIPLLLALI. At 299–318 the chain is on the cytoplasmic side; sequence CYLLLESQAKKLRAKNEAAM.

To Synechocystis PCC 6803 slr0712.

The protein resides in the cell inner membrane. The protein is Inner membrane protein YbhN (ybhN) of Escherichia coli (strain K12).